The primary structure comprises 172 residues: Type II secretion system protein H (172 aa).

Residues 1 to 6 (MRASRG) constitute a propeptide, leader sequence. Phe7 is subject to N-methylphenylalanine. The helical transmembrane segment at 7 to 27 (FTLIELMVVMVIISVLIGLAV) threads the bilayer.

The protein belongs to the GSP H family. Type II secretion is composed of four main components: the outer membrane complex, the inner membrane complex, the cytoplasmic secretion ATPase and the periplasm-spanning pseudopilus. Forms the tip of the type II pseudopilus by interacting with XcpV, XcpW and XcpX. Interacts with core component XcpT. In terms of processing, cleaved by prepilin peptidase. Post-translationally, methylated by prepilin peptidase at the amino group of the N-terminal phenylalanine once the leader sequence is cleaved by prepilin peptidase.

It is found in the cell inner membrane. Component of the type II secretion system required for the energy-dependent secretion of extracellular factors such as proteases and toxins from the periplasm. Part of the pseudopilus tip complex that is critical for the recognition and binding of secretion substrates. Type II pseudopilus confers increased bacterial adhesive capabilities. The protein is Type II secretion system protein H (xcpU) of Pseudomonas aeruginosa (strain ATCC 15692 / DSM 22644 / CIP 104116 / JCM 14847 / LMG 12228 / 1C / PRS 101 / PAO1).